Reading from the N-terminus, the 81-residue chain is MNRMFRVLGFWTGIFAVMFYLGDMKDASLLFFGQTILFVFLSYLNLTERMYIYIFGAYLTIFFAGFTYYSIFIMVPGGGGH.

The next 2 membrane-spanning stretches (helical) occupy residues 27-47 and 54-74; these read ASLL…LNLT and IFGA…IFIM.

Its subcellular location is the cell membrane. This is an uncharacterized protein from Bacillus subtilis (strain 168).